Reading from the N-terminus, the 490-residue chain is RNA-binding post-transcriptional regulator cip1 (490 aa).

Disordered regions lie at residues arginine 16–alanine 63, alanine 76–leucine 97, and histidine 138–threonine 199. A compositionally biased stretch (polar residues) spans arginine 34–serine 62. 5 positions are modified to phosphoserine: serine 37, serine 41, serine 49, serine 86, and serine 141. Low complexity-rich tracts occupy residues alanine 76–serine 88 and serine 141–lysine 160. Polar residues predominate over residues alanine 164–proline 192. In terms of domain architecture, RRM spans threonine 202 to glutamine 280. 3 positions are modified to phosphoserine: serine 397, serine 401, and serine 427. Residue threonine 431 is modified to Phosphothreonine. Phosphoserine occurs at positions 435, 456, and 466. A disordered region spans residues proline 457 to phenylalanine 490.

As to quaternary structure, interacts with csx1. In terms of processing, phosphorylated by sty1.

It is found in the cytoplasm. In terms of biological role, regulates global gene expression after oxidative stress. Interacts and stabilizes mRNAs and may regulate their transition between different cytoplasmic components after oxidative stress. The polypeptide is RNA-binding post-transcriptional regulator cip1 (cip1) (Schizosaccharomyces pombe (strain 972 / ATCC 24843) (Fission yeast)).